A 373-amino-acid chain; its full sequence is Histidinol-phosphate aminotransferase (373 aa).

Lys229 bears the N6-(pyridoxal phosphate)lysine mark.

This sequence belongs to the class-II pyridoxal-phosphate-dependent aminotransferase family. Histidinol-phosphate aminotransferase subfamily. Pyridoxal 5'-phosphate serves as cofactor.

It catalyses the reaction L-histidinol phosphate + 2-oxoglutarate = 3-(imidazol-4-yl)-2-oxopropyl phosphate + L-glutamate. Its pathway is amino-acid biosynthesis; L-histidine biosynthesis; L-histidine from 5-phospho-alpha-D-ribose 1-diphosphate: step 7/9. This is Histidinol-phosphate aminotransferase (hisC) from Methanothermobacter thermautotrophicus (strain ATCC 29096 / DSM 1053 / JCM 10044 / NBRC 100330 / Delta H) (Methanobacterium thermoautotrophicum).